The chain runs to 290 residues: ATP synthase gamma chain (290 aa).

It belongs to the ATPase gamma chain family. As to quaternary structure, F-type ATPases have 2 components, CF(1) - the catalytic core - and CF(0) - the membrane proton channel. CF(1) has five subunits: alpha(3), beta(3), gamma(1), delta(1), epsilon(1). CF(0) has three main subunits: a, b and c.

The protein localises to the cell membrane. Functionally, produces ATP from ADP in the presence of a proton gradient across the membrane. The gamma chain is believed to be important in regulating ATPase activity and the flow of protons through the CF(0) complex. This is ATP synthase gamma chain from Chloroflexus aurantiacus (strain ATCC 29366 / DSM 635 / J-10-fl).